The sequence spans 382 residues: Flap endonuclease 1-A (382 aa).

Positions 1–104 are N-domain; it reads MGIHGLAKLI…GELAKRSERR (104 aa). Residue Asp34 coordinates Mg(2+). DNA is bound by residues Arg47 and Arg70. Mg(2+)-binding residues include Asp86, Glu158, Glu160, Asp179, and Asp181. Residues 122-253 are I-domain; sequence NIEKFTKRLV…KRAIDLIRQH (132 aa). Residue Glu158 participates in DNA binding. DNA is bound by residues Gly231 and Asp233. Asp233 serves as a coordination point for Mg(2+). Positions 336-344 are interaction with PCNA; that stretch reads TQGRLDDFF. Residues 350–382 form a disordered region; the sequence is VSSTKRKEAESKGSAKKKAKTGGTPAGKFKRGK.

This sequence belongs to the XPG/RAD2 endonuclease family. FEN1 subfamily. In terms of assembly, interacts with PCNA. Three molecules of fen1 bind to one PCNA trimer with each molecule binding to one PCNA monomer. PCNA stimulates the nuclease activity without altering cleavage specificity. Mg(2+) serves as cofactor. Post-translationally, phosphorylated. Phosphorylation upon DNA damage induces relocalization to the nuclear plasma.

Its subcellular location is the nucleus. It localises to the nucleolus. It is found in the nucleoplasm. The protein localises to the mitochondrion. Functionally, structure-specific nuclease with 5'-flap endonuclease and 5'-3' exonuclease activities involved in DNA replication and repair. During DNA replication, cleaves the 5'-overhanging flap structure that is generated by displacement synthesis when DNA polymerase encounters the 5'-end of a downstream Okazaki fragment. It enters the flap from the 5'-end and then tracks to cleave the flap base, leaving a nick for ligation. Also involved in the long patch base excision repair (LP-BER) pathway, by cleaving within the apurinic/apyrimidinic (AP) site-terminated flap. Acts as a genome stabilization factor that prevents flaps from equilibrating into structures that lead to duplications and deletions. Also possesses 5'-3' exonuclease activity on nicked or gapped double-stranded DNA, and exhibits RNase H activity. Also involved in replication and repair of rDNA and in repairing mitochondrial DNA. In Xenopus laevis (African clawed frog), this protein is Flap endonuclease 1-A (fen1-a).